The following is a 510-amino-acid chain: ATP synthase subunit alpha (510 aa).

G169–T176 serves as a coordination point for ATP.

Belongs to the ATPase alpha/beta chains family. In terms of assembly, F-type ATPases have 2 components, CF(1) - the catalytic core - and CF(0) - the membrane proton channel. CF(1) has five subunits: alpha(3), beta(3), gamma(1), delta(1), epsilon(1). CF(0) has three main subunits: a(1), b(2) and c(9-12). The alpha and beta chains form an alternating ring which encloses part of the gamma chain. CF(1) is attached to CF(0) by a central stalk formed by the gamma and epsilon chains, while a peripheral stalk is formed by the delta and b chains.

The protein localises to the cell inner membrane. The enzyme catalyses ATP + H2O + 4 H(+)(in) = ADP + phosphate + 5 H(+)(out). In terms of biological role, produces ATP from ADP in the presence of a proton gradient across the membrane. The alpha chain is a regulatory subunit. This chain is ATP synthase subunit alpha, found in Rickettsia rickettsii (strain Iowa).